The primary structure comprises 422 residues: Serine--tRNA ligase (422 aa).

An L-serine-binding site is contributed by 229–231 (TAE). Residue 260–262 (RKE) coordinates ATP. Glutamate 283 provides a ligand contact to L-serine. 347–350 (EISS) lines the ATP pocket. Serine 383 contributes to the L-serine binding site.

This sequence belongs to the class-II aminoacyl-tRNA synthetase family. Type-1 seryl-tRNA synthetase subfamily. Homodimer. The tRNA molecule binds across the dimer.

The protein resides in the cytoplasm. The enzyme catalyses tRNA(Ser) + L-serine + ATP = L-seryl-tRNA(Ser) + AMP + diphosphate + H(+). The catalysed reaction is tRNA(Sec) + L-serine + ATP = L-seryl-tRNA(Sec) + AMP + diphosphate + H(+). It functions in the pathway aminoacyl-tRNA biosynthesis; selenocysteinyl-tRNA(Sec) biosynthesis; L-seryl-tRNA(Sec) from L-serine and tRNA(Sec): step 1/1. Functionally, catalyzes the attachment of serine to tRNA(Ser). Is also able to aminoacylate tRNA(Sec) with serine, to form the misacylated tRNA L-seryl-tRNA(Sec), which will be further converted into selenocysteinyl-tRNA(Sec). This chain is Serine--tRNA ligase, found in Citrifermentans bemidjiense (strain ATCC BAA-1014 / DSM 16622 / JCM 12645 / Bem) (Geobacter bemidjiensis).